We begin with the raw amino-acid sequence, 248 residues long: Pyridoxine 5'-phosphate synthase (248 aa).

N12 is a 3-amino-2-oxopropyl phosphate binding site. Residue 14 to 15 (DH) participates in 1-deoxy-D-xylulose 5-phosphate binding. R23 provides a ligand contact to 3-amino-2-oxopropyl phosphate. The Proton acceptor role is filled by H48. Positions 50 and 55 each coordinate 1-deoxy-D-xylulose 5-phosphate. The active-site Proton acceptor is the E75. Residue T105 coordinates 1-deoxy-D-xylulose 5-phosphate. Catalysis depends on H196, which acts as the Proton donor. Residues G197 and 218-219 (GH) contribute to the 3-amino-2-oxopropyl phosphate site.

It belongs to the PNP synthase family. As to quaternary structure, homooctamer; tetramer of dimers.

It localises to the cytoplasm. The enzyme catalyses 3-amino-2-oxopropyl phosphate + 1-deoxy-D-xylulose 5-phosphate = pyridoxine 5'-phosphate + phosphate + 2 H2O + H(+). It functions in the pathway cofactor biosynthesis; pyridoxine 5'-phosphate biosynthesis; pyridoxine 5'-phosphate from D-erythrose 4-phosphate: step 5/5. Its function is as follows. Catalyzes the complicated ring closure reaction between the two acyclic compounds 1-deoxy-D-xylulose-5-phosphate (DXP) and 3-amino-2-oxopropyl phosphate (1-amino-acetone-3-phosphate or AAP) to form pyridoxine 5'-phosphate (PNP) and inorganic phosphate. This is Pyridoxine 5'-phosphate synthase from Pseudomonas aeruginosa (strain LESB58).